Here is a 91-residue protein sequence, read N- to C-terminus: Elongation factor 1-beta (91 aa).

In terms of assembly, homodimer.

Its function is as follows. Promotes the exchange of GDP for GTP in EF-1-alpha/GDP, thus allowing the regeneration of EF-1-alpha/GTP that could then be used to form the ternary complex EF-1-alpha/GTP/AAtRNA. The polypeptide is Elongation factor 1-beta (ef1b) (Saccharolobus solfataricus (strain ATCC 35092 / DSM 1617 / JCM 11322 / P2) (Sulfolobus solfataricus)).